A 369-amino-acid chain; its full sequence is NAD(P)H-quinone oxidoreductase subunit 1, chloroplastic (369 aa).

5 helical membrane-spanning segments follow: residues 25-45 (FGFIWIITPILTYTLGVTIGI), 104-124 (VMVVVPVFLSYLVIPLGHGII), 130-150 (IGVFFWIAVSSVAPLGLLTAG), 270-290 (LSATILYLGGWNSPIPFLFLP), and 306-326 (VISITIAIIITLAKAYSFLFI).

This sequence belongs to the complex I subunit 1 family. As to quaternary structure, NDH is composed of at least 16 different subunits, 5 of which are encoded in the nucleus.

It localises to the plastid. The protein localises to the chloroplast thylakoid membrane. It carries out the reaction a plastoquinone + NADH + (n+1) H(+)(in) = a plastoquinol + NAD(+) + n H(+)(out). The enzyme catalyses a plastoquinone + NADPH + (n+1) H(+)(in) = a plastoquinol + NADP(+) + n H(+)(out). Its function is as follows. NDH shuttles electrons from NAD(P)H:plastoquinone, via FMN and iron-sulfur (Fe-S) centers, to quinones in the photosynthetic chain and possibly in a chloroplast respiratory chain. The immediate electron acceptor for the enzyme in this species is believed to be plastoquinone. Couples the redox reaction to proton translocation, and thus conserves the redox energy in a proton gradient. The protein is NAD(P)H-quinone oxidoreductase subunit 1, chloroplastic of Huperzia lucidula (Shining clubmoss).